Consider the following 431-residue polypeptide: UDP-N-acetylmuramate--L-alanine ligase (431 aa).

Residue 108–114 coordinates ATP; sequence GAHGKST.

This sequence belongs to the MurCDEF family.

It localises to the cytoplasm. It catalyses the reaction UDP-N-acetyl-alpha-D-muramate + L-alanine + ATP = UDP-N-acetyl-alpha-D-muramoyl-L-alanine + ADP + phosphate + H(+). It functions in the pathway cell wall biogenesis; peptidoglycan biosynthesis. Cell wall formation. The polypeptide is UDP-N-acetylmuramate--L-alanine ligase (Campylobacter jejuni subsp. doylei (strain ATCC BAA-1458 / RM4099 / 269.97)).